The following is a 447-amino-acid chain: Cobyrinate a,c-diamide synthase (447 aa).

The 189-residue stretch at 247-435 (RIGVAIDEAF…IHIHAASCPQ (189 aa)) folds into the GATase cobBQ-type domain. Cys329 (nucleophile) is an active-site residue.

This sequence belongs to the CobB/CbiA family. Mg(2+) is required as a cofactor.

The enzyme catalyses cob(II)yrinate + 2 L-glutamine + 2 ATP + 2 H2O = cob(II)yrinate a,c diamide + 2 L-glutamate + 2 ADP + 2 phosphate + 2 H(+). It carries out the reaction Ni-sirohydrochlorin + 2 L-glutamine + 2 ATP + 2 H2O = Ni-sirohydrochlorin a,c-diamide + 2 L-glutamate + 2 ADP + 2 phosphate + 2 H(+). It functions in the pathway cofactor biosynthesis; adenosylcobalamin biosynthesis; cob(II)yrinate a,c-diamide from sirohydrochlorin (anaerobic route): step 10/10. Functionally, catalyzes the ATP-dependent amidation of the two carboxylate groups at positions a and c of cobyrinate, using either L-glutamine or ammonia as the nitrogen source. Involved in the biosynthesis of the unique nickel-containing tetrapyrrole coenzyme F430, the prosthetic group of methyl-coenzyme M reductase (MCR), which plays a key role in methanogenesis and anaerobic methane oxidation. Catalyzes the ATP-dependent amidation of the two carboxylate groups at positions a and c of Ni-sirohydrochlorin, using L-glutamine or ammonia as the nitrogen source. The polypeptide is Cobyrinate a,c-diamide synthase (Methanothermobacter thermautotrophicus (strain ATCC 29096 / DSM 1053 / JCM 10044 / NBRC 100330 / Delta H) (Methanobacterium thermoautotrophicum)).